The primary structure comprises 394 residues: A-type flagellin (394 aa).

Belongs to the bacterial flagellin family. Phosphorylated on tyrosine residue(s). Post-translationally, flagellin from strain 5939 but not from strain 170018 is glycosylated.

It is found in the secreted. The protein localises to the bacterial flagellum. In terms of biological role, flagellin is the subunit protein which polymerizes to form the filaments of bacterial flagella. The polypeptide is A-type flagellin (fliC) (Pseudomonas aeruginosa).